Here is a 303-residue protein sequence, read N- to C-terminus: Hemolysin E, chromosomal (303 aa).

An intrachain disulfide couples C87 to C285. Residues 183 to 203 (AGVVAGPFGLIISYSIAAGVV) form a helical membrane-spanning segment.

In terms of assembly, monomer and oligomer. In periplasm, it is present as a monomer, while in outer membrane vesicles, it oligomerizes to form a pore structure that is active. The pore is formed by a dodecamer. Post-translationally, in periplasm, it forms a disulfide bond between Cys-87 and Cys-285, which prevents the oligomerization. In outer membrane vesicles, the redox status prevents formation of the disulfide bond, leading to oligomerization and pore formation.

Its subcellular location is the secreted. The protein localises to the periplasm. It localises to the host cell membrane. In terms of biological role, toxin, which has some hemolytic activity towards mammalian cells. Acts by forming a pore-like structure upon contact with mammalian cells. This chain is Hemolysin E, chromosomal (hlyE), found in Escherichia coli (strain K12).